Reading from the N-terminus, the 113-residue chain is UPF0060 membrane protein CV_3485 (113 aa).

The next 4 membrane-spanning stretches (helical) occupy residues 12 to 32 (GLFV…WLVL), 37 to 57 (SLWL…LLTL), 67 to 87 (AAYG…VDGV), and 91 to 111 (RWDA…MLAP).

This sequence belongs to the UPF0060 family.

The protein localises to the cell inner membrane. The polypeptide is UPF0060 membrane protein CV_3485 (Chromobacterium violaceum (strain ATCC 12472 / DSM 30191 / JCM 1249 / CCUG 213 / NBRC 12614 / NCIMB 9131 / NCTC 9757 / MK)).